Consider the following 377-residue polypeptide: Actin-related protein T2 (377 aa).

The protein belongs to the actin family.

The protein resides in the cytoplasm. Its subcellular location is the cytoskeleton. The chain is Actin-related protein T2 (ACTRT2) from Homo sapiens (Human).